We begin with the raw amino-acid sequence, 327 residues long: Probable cell division protein WhiA (327 aa).

The segment at residues 275-308 (SLEELGQLADPPMTKDAVAGRIRRLLSMADRRAR) is a DNA-binding region (H-T-H motif).

Belongs to the WhiA family.

Functionally, involved in cell division and chromosome segregation. The polypeptide is Probable cell division protein WhiA (Nocardia farcinica (strain IFM 10152)).